A 340-amino-acid polypeptide reads, in one-letter code: MTIINSRIIDIRQSTFEESIPDQVTAGLSTTPKTLPALLFYSGEGIRHWIEHSTAADFYPRHEELRILRARAAEMVDSIANNSVVVDLGSASLDKVLPLLEALEASKKNITFYALDLSFSELQSTLQSLPYEQFKFVKIGALHGTFEDGVQWLKDTPGVQDRPHCLLLFGLTVGNYSRPNAAKFLQNIASNALAASPVQSSILLSLDSCKMPTKVLRAYTAEGVVPFALASLDYGNTLFAPNKMGEKVFQPSDWYFLSEWNYMLGRHEASLITKGKEVRLGGPLNDIVIEKHEKIRFGCSYKYDTDERQVLFGSAGLTDVKEWSVEGCDVSFYQLQMCPN.

Belongs to the methyltransferase superfamily. As to quaternary structure, homodimer.

It carries out the reaction 4-(3-methylbut-2-enyl)-L-tryptophan + S-adenosyl-L-methionine = 4-(3-methylbut-2-enyl)-L-abrine + S-adenosyl-L-homocysteine + H(+). It functions in the pathway alkaloid biosynthesis; ergot alkaloid biosynthesis. Its function is as follows. 4-dimethylallyltryptophan N-methyltransferase; part of the gene cluster that mediates the biosynthesis of isofumigaclavines, fungal ergot alkaloids. The tryptophan dimethylallyltransferase ifgA catalyzes the first step of ergot alkaloid biosynthesis by condensing dimethylallyl diphosphate (DMAP) and tryptophan to form 4-dimethylallyl-L-tryptophan. The second step is catalyzed by the methyltransferase ifgB that methylates 4-dimethylallyl-L-tryptophan in the presence of S-adenosyl-L-methionine, resulting in the formation of N-methyl-dimethylallyl-L-tryptophan. The catalase ifgD and the FAD-dependent oxidoreductase ifgC then transform N-methyl-dimethylallyl-L-tryptophan to chanoclavine-I which is further oxidized by ifgE in the presence of NAD(+), resulting in the formation of chanoclavine-I aldehyde. The chanoclavine-I aldehyde reductases ifgG and/or fgaOx3 reduce chanoclavine-I aldehyde to dihydrochanoclavine-I aldehyde that spontaneously dehydrates to form 6,8-dimethyl-6,7-didehydroergoline. The festuclavine dehydrogenases ifgF1 and/or ifgF2 then catalyze the reduction of 6,8-dimethyl-6,7-didehydroergoline to form festuclavine. Hydrolysis of festuclavine by a yet undetermined cytochrome P450 monooxygenase (called ifgH) then leads to the formation of isofumigaclavine B which is in turn acetylated by ifgI to isofumigaclavine A. Penicillium roqueforti has interestingly at least two sets of genes for the consumption of chanoclavine-I aldehyde on three different loci, the OYEs ifgG/fgaOx3 and the festuclavine synthase homologs ifgF1/ifgF2. The reason for the duplication of these genes is unclear, probably to ensure the conversion of chanoclavine-I aldehyde by differential gene expression under various environmental conditions. This Penicillium roqueforti (strain FM164) protein is 4-dimethylallyltryptophan N-methyltransferase ifgB.